The following is a 276-amino-acid chain: Bis(5'-nucleosyl)-tetraphosphatase, symmetrical (276 aa).

The protein belongs to the Ap4A hydrolase family.

The catalysed reaction is P(1),P(4)-bis(5'-adenosyl) tetraphosphate + H2O = 2 ADP + 2 H(+). Its function is as follows. Hydrolyzes diadenosine 5',5'''-P1,P4-tetraphosphate to yield ADP. This chain is Bis(5'-nucleosyl)-tetraphosphatase, symmetrical, found in Dechloromonas aromatica (strain RCB).